A 407-amino-acid polypeptide reads, in one-letter code: Putative metabolite transport protein HI_1104 (407 aa).

Residues 1–16 lie on the Cytoplasmic side of the membrane; sequence MTNKVNSYGWKALIGS. The chain crosses the membrane as a helical span at residues 17 to 37; it reads AVGYGMDGFDLLILGFMLSAI. Residues 38–48 are Periplasmic-facing; the sequence is SADLNLTPAQG. Residues 49–69 traverse the membrane as a helical segment; that stretch reads GSLVTWTLIGAVFGGILFGAL. Topologically, residues 70-77 are cytoplasmic; that stretch reads SDKYGRVR. Residues 78–98 form a helical membrane-spanning segment; the sequence is VLTWTILLFAVFTGLCAIAQG. At 99-107 the chain is on the periplasmic side; it reads YWDLLIYRT. Residues 108–128 form a helical membrane-spanning segment; that stretch reads IAGIGLGGEFGIGMALAAEAW. Over 129–138 the chain is Cytoplasmic; the sequence is PARHRAKAAS. A helical membrane pass occupies residues 139 to 159; it reads YVALGWQVGVLGAALLTPLLL. Pro-160 is a topological domain (periplasmic). A helical transmembrane segment spans residues 161 to 181; sequence HIGWRGMFLVGIFPAFVAWFL. Over 182 to 224 the chain is Cytoplasmic; it reads RSHLHEPEIFTQKQTALSTQSSFTDKLRSFQLLIKDKATSKIS. Residues 225 to 245 form a helical membrane-spanning segment; sequence LGIVVLTSVQNFGYYGIMIWL. Over 246–261 the chain is Periplasmic; sequence PNFLSKQLGFSLTKSG. A helical transmembrane segment spans residues 262 to 282; it reads LWTAVTVCGMMAGIWIFGQLA. Topologically, residues 283–288 are cytoplasmic; that stretch reads DRIGRK. The helical transmembrane segment at 289–309 threads the bilayer; it reads PSFLLFQLGAVISIVVYSQLT. Residues 310–312 are Periplasmic-facing; it reads DPD. A helical transmembrane segment spans residues 313 to 333; sequence IMLLAGAFLGMFVNGMLGGYG. The Cytoplasmic portion of the chain corresponds to 334 to 357; it reads ALMAEAYPTEARATAQNVLFNIGR. 2 helical membrane passes run 358–378 and 379–399; these read AVGGFGPVVVGSVVLAYSFQT and AIALLAIIYVIDMLATIFLIP. Residues 400 to 407 are Cytoplasmic-facing; sequence ELKGKALD.

It belongs to the major facilitator superfamily. Aromatic acid:H(+) symporter (AAHS) (TC 2.A.1.15) family.

The protein localises to the cell inner membrane. The chain is Putative metabolite transport protein HI_1104 from Haemophilus influenzae (strain ATCC 51907 / DSM 11121 / KW20 / Rd).